A 427-amino-acid polypeptide reads, in one-letter code: Acetylornithine aminotransferase, mitochondrial (427 aa).

An N6-(pyridoxal phosphate)lysine modification is found at Lys279.

This sequence belongs to the class-III pyridoxal-phosphate-dependent aminotransferase family. Pyridoxal 5'-phosphate serves as cofactor.

It localises to the mitochondrion matrix. It carries out the reaction N(2)-acetyl-L-ornithine + 2-oxoglutarate = N-acetyl-L-glutamate 5-semialdehyde + L-glutamate. It participates in amino-acid biosynthesis; L-arginine biosynthesis; N(2)-acetyl-L-ornithine from L-glutamate: step 4/4. The sequence is that of Acetylornithine aminotransferase, mitochondrial (ARG8) from Candida glabrata (strain ATCC 2001 / BCRC 20586 / JCM 3761 / NBRC 0622 / NRRL Y-65 / CBS 138) (Yeast).